A 147-amino-acid chain; its full sequence is Prefoldin subunit alpha (147 aa).

This sequence belongs to the prefoldin alpha subunit family. As to quaternary structure, heterohexamer of two alpha and four beta subunits.

It localises to the cytoplasm. In terms of biological role, molecular chaperone capable of stabilizing a range of proteins. Seems to fulfill an ATP-independent, HSP70-like function in archaeal de novo protein folding. In Saccharolobus islandicus (strain M.16.27) (Sulfolobus islandicus), this protein is Prefoldin subunit alpha.